We begin with the raw amino-acid sequence, 427 residues long: L-cysteine:1D-myo-inositol 2-amino-2-deoxy-alpha-D-glucopyranoside ligase (427 aa).

Cys-46 lines the Zn(2+) pocket. L-cysteinyl-5'-AMP contacts are provided by residues 46–49 (CGIT), Thr-61, and 84–86 (NVT). Residues 48–58 (ITPYDATHMGH) carry the 'HIGH' region motif. The 'ERGGDP' region signature appears at 186–191 (ERGGDP). L-cysteinyl-5'-AMP is bound at residue Trp-233. A Zn(2+)-binding site is contributed by Cys-237. An L-cysteinyl-5'-AMP-binding site is contributed by 255–257 (GSD). Residue His-262 coordinates Zn(2+). L-cysteinyl-5'-AMP is bound at residue Val-289. The 'KMSKS' region motif lies at 295-299 (KMSKS).

This sequence belongs to the class-I aminoacyl-tRNA synthetase family. MshC subfamily. Monomer. The cofactor is Zn(2+).

The catalysed reaction is 1D-myo-inositol 2-amino-2-deoxy-alpha-D-glucopyranoside + L-cysteine + ATP = 1D-myo-inositol 2-(L-cysteinylamino)-2-deoxy-alpha-D-glucopyranoside + AMP + diphosphate + H(+). Functionally, catalyzes the ATP-dependent condensation of GlcN-Ins and L-cysteine to form L-Cys-GlcN-Ins. This is L-cysteine:1D-myo-inositol 2-amino-2-deoxy-alpha-D-glucopyranoside ligase from Catenulispora acidiphila (strain DSM 44928 / JCM 14897 / NBRC 102108 / NRRL B-24433 / ID139908).